Consider the following 436-residue polypeptide: Prenyltransferase nscD (436 aa).

The protein belongs to the tryptophan dimethylallyltransferase family.

The protein operates within secondary metabolite biosynthesis. Its function is as follows. Prenyltransferase; part of the gene cluster that mediates the biosynthesis of neosartoricin B, a prenylated anthracenone that probably exhibits T-cell antiproliferative activity, suggestive of a physiological role as an immunosuppressive agent. The non-reducing polyketide synthase nscA probably synthesizes and cyclizes the decaketide backbone. The hydrolase nscB then mediates the product release through hydrolysis followed by spontaneous decarboxylation. The prenyltransferase nscD catalyzes the addition of the dimethylallyl group to the aromatic C5. The FAD-dependent monooxygenase nscC is then responsible for the stereospecific hydroxylation at C2. Neosartoricin B can be converted into two additional compounds neosartoricins C and D. Neosartoricin C is a spirocyclic compound that is cyclized through the attack of C3 hydroxyl on C14, followed by dehydration. On the other hand, neosartoricin D is a further cyclized compound in which attack of C2 on C14 in neosartoricin C results in the formation of the acetal-containing dioxabicyclo-octanone ring. Both of these compounds are novel and possibly represent related metabolites of the gene cluster. This Trichophyton rubrum (strain ATCC MYA-4607 / CBS 118892) (Athlete's foot fungus) protein is Prenyltransferase nscD.